The following is a 363-amino-acid chain: Zinc finger protein 830 (363 aa).

An N-acetylalanine modification is found at A2. Residues 16–40 (VNQEELRRLMREKQRLSTNRKRIES) are a coiled coil. A C2H2-type zinc finger spans residues 53–75 (CALCNTPVKSELLWQTHVLGKQH). Residues 81-213 (ELKGAKGATQ…NPPKAPLVPH (133 aa)) form a disordered region. Residues 90-99 (QGPSTGTVPQ) show a composition bias toward polar residues. Over residues 104-115 (RATDVESQDAKK) the composition is skewed to basic and acidic residues. Low complexity predominate over residues 129-143 (SASSANLDAARAAPS). A compositionally biased stretch (acidic residues) spans 152-164 (DYDDEEEEEEEGG). Basic and acidic residues predominate over residues 165–184 (GEERRDSSKHLPDAQGKEHS). The segment covering 189–205 (RETTSNVLPNDPFNTNP) has biased composition (polar residues). A Phosphoserine modification is found at S216. The stretch at 303 to 331 (IECYRRVEKLRNRQDEIKNKLKEVLTIKE) forms a coiled coil. 2 positions are modified to phosphoserine: S342 and S353.

In terms of assembly, component of the XAB2 complex, a multimeric protein complex composed of XAB2, PRPF19, AQR, ZNF830, ISY1, and PPIE; this complex binds preferentially to RNA. Interacts with XAB2. Identified in a pentameric intron-binding (IB) complex composed of AQR, XAB2, ISY1, ZNF830 and PPIE that is incorporated into the spliceosome as a preassembled complex. The IB complex does not contain PRPF19. Post-translationally, phosphorylated in response to DNA damage by the cell cycle checkpoint kinases ATR/ATM. Widely expressed at low level. Expressed in oocytes from primordial to antral follicles. Also detected in somatic cells of the ovary, namely, in granulosa cells from the pre-antral follicle stage onward.

Its subcellular location is the nucleus. The protein localises to the chromosome. It localises to the nucleus speckle. Functionally, may play a role in pre-mRNA splicing as component of the spliceosome. Acts as an important regulator of the cell cycle that participates in the maintenance of genome integrity. During cell cycle progression in embryonic fibroblast, prevents replication fork collapse, double-strand break formation and cell cycle checkpoint activation. Controls mitotic cell cycle progression and cell survival in rapidly proliferating intestinal epithelium and embryonic stem cells. During the embryo preimplantation, controls different aspects of M phase. During early oocyte growth, plays a role in oocyte survival by preventing chromosomal breaks formation, activation of TP63 and reduction of transcription. In Mus musculus (Mouse), this protein is Zinc finger protein 830.